Reading from the N-terminus, the 209-residue chain is MDFFTNPNVLFYITAYLVGGIPFGYILAKIFAGVDIKQSGSKSIGATNVLRVVKEKDPKLAKKLAIATVVFDALKGAVLVLIAKLLGFPPATWWLIGIMTVLGHCYSPFLKFEGGKGVATGMGVLLVLLPVETIIGIVTWLIVAKTTKISSLSSLSGLVALVVASFIVHPDMPYVHSHAPLLLLAFIIFYKHLPNIKRLLTGQEGKVAA.

The next 5 helical transmembrane spans lie at 8-28 (NVLF…YILA), 78-98 (VLVL…LIGI), 124-144 (VLLV…LIVA), 149-169 (ISSL…FIVH), and 170-190 (PDMP…IIFY).

This sequence belongs to the PlsY family. In terms of assembly, probably interacts with PlsX.

It localises to the cell inner membrane. The catalysed reaction is an acyl phosphate + sn-glycerol 3-phosphate = a 1-acyl-sn-glycero-3-phosphate + phosphate. The protein operates within lipid metabolism; phospholipid metabolism. Its function is as follows. Catalyzes the transfer of an acyl group from acyl-phosphate (acyl-PO(4)) to glycerol-3-phosphate (G3P) to form lysophosphatidic acid (LPA). This enzyme utilizes acyl-phosphate as fatty acyl donor, but not acyl-CoA or acyl-ACP. This is Glycerol-3-phosphate acyltransferase from Nitratiruptor sp. (strain SB155-2).